The primary structure comprises 70 residues: Large ribosomal subunit protein bL31 (70 aa).

The Zn(2+) site is built by Cys16, Cys18, Cys37, and Cys40.

It belongs to the bacterial ribosomal protein bL31 family. Type A subfamily. In terms of assembly, part of the 50S ribosomal subunit. Zn(2+) is required as a cofactor.

Binds the 23S rRNA. This chain is Large ribosomal subunit protein bL31, found in Shewanella woodyi (strain ATCC 51908 / MS32).